The chain runs to 341 residues: S-adenosylmethionine:tRNA ribosyltransferase-isomerase (341 aa).

This sequence belongs to the QueA family. In terms of assembly, monomer.

The protein resides in the cytoplasm. It carries out the reaction 7-aminomethyl-7-carbaguanosine(34) in tRNA + S-adenosyl-L-methionine = epoxyqueuosine(34) in tRNA + adenine + L-methionine + 2 H(+). It participates in tRNA modification; tRNA-queuosine biosynthesis. Functionally, transfers and isomerizes the ribose moiety from AdoMet to the 7-aminomethyl group of 7-deazaguanine (preQ1-tRNA) to give epoxyqueuosine (oQ-tRNA). This Pelodictyon phaeoclathratiforme (strain DSM 5477 / BU-1) protein is S-adenosylmethionine:tRNA ribosyltransferase-isomerase.